Here is a 237-residue protein sequence, read N- to C-terminus: Ribosomal RNA small subunit methyltransferase G (237 aa).

S-adenosyl-L-methionine-binding positions include Gly-78, Phe-83, 129-130 (AE), and Arg-148.

Belongs to the methyltransferase superfamily. RNA methyltransferase RsmG family.

Its subcellular location is the cytoplasm. Functionally, specifically methylates the N7 position of a guanine in 16S rRNA. In Streptococcus equi subsp. equi (strain 4047), this protein is Ribosomal RNA small subunit methyltransferase G.